A 239-amino-acid polypeptide reads, in one-letter code: MPINKFSARSLDNDVPNKPLIFVMEGRYQNWIKPIMLLECLEIDYDAACIDGPTTRTDWFTRLHPQRYVPAMIDVEDGQRVSSWDSSQMLQYLSNKYDAKRMWNGHNAAENLEICNWLTFETASLGPTAKYWVWYALRQGEEQNPKAQQKMYNDLRVQYSILDKHLAQPGQNWVGLKDRPTIADLAIYPFADDPTMARMGIDKKDFPSLKAWSEALSKVPGVAKAYAELDSRKEIAIGA.

Residues 18–101 (KPLIFVMEGR…YLSNKYDAKR (84 aa)) enclose the GST N-terminal domain. The GST C-terminal domain occupies 107–237 (NAAENLEICN…ELDSRKEIAI (131 aa)).

Belongs to the GST superfamily.

It catalyses the reaction RX + glutathione = an S-substituted glutathione + a halide anion + H(+). Its pathway is mycotoxin biosynthesis. Its function is as follows. Glutathione S-transferase; part of the gene cluster that mediates the biosynthesis of 11'-deoxyverticillin A, one of the dimeric epipolythiodioxopiperazines (ETPs) from the verticillin family that act as mycotoxins. 11'-deoxyverticillin A is required for normal conidiation. The nonribosomal peptide synthetase verP is speculated to be responsible for condensation of amino acids to form the carbon skeleton of verticillin, whereas the cluster-specific tailoring enzymes are involved in further modifications leading to the production of 11'-deoxyverticillin A. In Clonostachys rogersoniana, this protein is Glutathione S-transferase verG.